A 414-amino-acid polypeptide reads, in one-letter code: Arrestin domain-containing protein 3 (414 aa).

2 consecutive short sequence motifs (PPxY motif) follow at residues 346 to 349 and 391 to 394; these read PPSY and PPLY. The tract at residues 393–414 is disordered; sequence LYSEIDPNPDQSADDRPSCPSR. The segment covering 405–414 has biased composition (basic and acidic residues); sequence ADDRPSCPSR.

It belongs to the arrestin family. As to quaternary structure, interacts (via PPxY motifs) with NEDD4 (via WW domains). Interacts with ADRB2. Interacts with ADRB3. Interacts with HGS (via PPxY motifs). Does not bind TXN (thioredoxin). Interacts with ITCH.

It is found in the cytoplasm. It localises to the cell membrane. The protein localises to the lysosome. Its subcellular location is the endosome. The protein resides in the early endosome. Functionally, adapter protein that plays a role in regulating cell-surface expression of adrenergic receptors and probably also other G protein-coupled receptors. Plays a role in NEDD4-mediated ubiquitination and endocytosis af activated ADRB2 and subsequent ADRB2 degradation. May recruit NEDD4 to ADRB2. Alternatively, may function as adapter protein that does not play a major role in recruiting NEDD4 to ADRB2, but rather plays a role in a targeting ADRB2 to endosomes. The protein is Arrestin domain-containing protein 3 (ARRDC3) of Pongo abelii (Sumatran orangutan).